A 355-amino-acid polypeptide reads, in one-letter code: Beta-porphyranase C (355 aa).

The first 18 residues, 1-18, serve as a signal peptide directing secretion; that stretch reads MIKTLKRIPLVFLIAIMA. Cys-19 carries the N-palmitoyl cysteine lipid modification. Cys-19 carries S-diacylglycerol cysteine lipidation. Residues 22–72 are disordered; it reads SGDNGKDKVEEQEQAQEQGEKKGQGEERDKEDGIDGLQPTFLADQDPKPDD. The segment covering 39 to 54 has biased composition (basic and acidic residues); the sequence is QGEKKGQGEERDKEDG. Residues 71–355 form the GH16 domain; it reads DDKKWIKVEG…WVRVWQLEDL (285 aa). The substrate site is built by Trp-110, Glu-208, and Glu-213. The Nucleophile role is filled by Glu-208. Catalysis depends on Glu-213, which acts as the Proton donor.

This sequence belongs to the glycosyl hydrolase 16 family.

It localises to the cell outer membrane. The catalysed reaction is Hydrolysis of beta-D-galactopyranose-(1-&gt;4)-alpha-L-galactopyranose-6-sulfate linkages in porphyran.. Functionally, cleaves the sulfated polysaccharide porphyran at the (1-&gt;4) linkages between beta-D-galactopyranose and alpha-L-galactopyranose-6-sulfate, forming mostly the disaccharide alpha-L-galactopyranose-6-sulfate-(1-&gt;3)-beta-D-galactose. The chain is Beta-porphyranase C (porC) from Zobellia galactanivorans (strain DSM 12802 / CCUG 47099 / CIP 106680 / NCIMB 13871 / Dsij).